The chain runs to 329 residues: UDP-glucose 4-epimerase (329 aa).

NAD(+)-binding positions include 11–12 (YV), 31–36 (DNFSTG), 51–52 (DV), 71–75 (FAARS), Thr-115, Tyr-139, Lys-143, and Phe-167. Substrate is bound by residues Thr-115 and Tyr-139. The Proton acceptor role is filled by Tyr-139. Residues Asn-168, 185–186 (HL), 202–204 (FMF), Arg-217, and 277–280 (RAGD) contribute to the substrate site.

This sequence belongs to the NAD(P)-dependent epimerase/dehydratase family. Homodimer. NAD(+) is required as a cofactor.

It catalyses the reaction UDP-alpha-D-glucose = UDP-alpha-D-galactose. It functions in the pathway carbohydrate metabolism; galactose metabolism. Involved in the metabolism of galactose. Catalyzes the conversion of UDP-galactose (UDP-Gal) to UDP-glucose (UDP-Glc) through a mechanism involving the transient reduction of NAD. The chain is UDP-glucose 4-epimerase (galE) from Corynebacterium glutamicum (strain ATCC 13032 / DSM 20300 / JCM 1318 / BCRC 11384 / CCUG 27702 / LMG 3730 / NBRC 12168 / NCIMB 10025 / NRRL B-2784 / 534).